Consider the following 331-residue polypeptide: Geranylgeranyl pyrophosphate synthase dpmaD (331 aa).

Isopentenyl diphosphate is bound by residues lysine 53, arginine 56, and histidine 85. 2 residues coordinate Mg(2+): aspartate 92 and aspartate 96. Position 101 (arginine 101) interacts with dimethylallyl diphosphate. Arginine 102 lines the isopentenyl diphosphate pocket. The dimethylallyl diphosphate site is built by lysine 179, threonine 180, and glutamine 213. Aspartate 216 contributes to the Mg(2+) binding site. Asparagine 220, lysine 230, and lysine 240 together coordinate dimethylallyl diphosphate.

This sequence belongs to the FPP/GGPP synthase family. It depends on Mg(2+) as a cofactor.

It catalyses the reaction isopentenyl diphosphate + dimethylallyl diphosphate = (2E)-geranyl diphosphate + diphosphate. It carries out the reaction isopentenyl diphosphate + (2E)-geranyl diphosphate = (2E,6E)-farnesyl diphosphate + diphosphate. The catalysed reaction is isopentenyl diphosphate + (2E,6E)-farnesyl diphosphate = (2E,6E,10E)-geranylgeranyl diphosphate + diphosphate. It functions in the pathway secondary metabolite biosynthesis; terpenoid biosynthesis. Its function is as follows. Geranylgeranyl pyrophosphate synthase; part of the gene cluster that mediates the biosynthesis of the diterpenoid pyrones subglutinols A and B. The first step of the pathway is the synthesis of the alpha-pyrone moiety by the polyketide synthase dpmaA via condensation of one acetyl-CoA starter unit with 3 malonyl-CoA units and 2 methylations. The alpha-pyrone is then combined with geranylgeranyl pyrophosphate (GGPP) formed by the GGPP synthase dpmaD through the action of the prenyltransferase dpmaC to yield a linear alpha-pyrone diterpenoid. Subsequent steps in the diterpenoid pyrone biosynthetic pathway involve the decalin core formation, which is initiated by the epoxidation of the C10-C11 olefin by the FAD-dependent oxidoreductase dpmaE, and is followed by a cyclization cascade catalyzed by the terpene cyclase dpmaB. The dehydrogenase dpmaF is then involved in tetrahydrofuran (THF) ring formation at the C5 unit to complete the formation of subglutinols A and B. The sequence is that of Geranylgeranyl pyrophosphate synthase dpmaD from Metarhizium anisopliae (Entomophthora anisopliae).